A 102-amino-acid polypeptide reads, in one-letter code: uncharacterized protein (102 aa).

This is an uncharacterized protein from Sulfolobus spindle-shape virus 1 (SSV1).